A 444-amino-acid polypeptide reads, in one-letter code: Gamma-glutamyl phosphate reductase (444 aa).

This sequence belongs to the gamma-glutamyl phosphate reductase family.

The protein resides in the cytoplasm. It carries out the reaction L-glutamate 5-semialdehyde + phosphate + NADP(+) = L-glutamyl 5-phosphate + NADPH + H(+). It functions in the pathway amino-acid biosynthesis; L-proline biosynthesis; L-glutamate 5-semialdehyde from L-glutamate: step 2/2. In terms of biological role, catalyzes the NADPH-dependent reduction of L-glutamate 5-phosphate into L-glutamate 5-semialdehyde and phosphate. The product spontaneously undergoes cyclization to form 1-pyrroline-5-carboxylate. This Albidiferax ferrireducens (strain ATCC BAA-621 / DSM 15236 / T118) (Rhodoferax ferrireducens) protein is Gamma-glutamyl phosphate reductase.